The sequence spans 170 residues: MLAIGDVILRAFNFVFLVIALGLTGSLAATTITQHNPQINFAVFAAAFGLLTSSFYGVFAYFVAAFAWPVILFVFDFLNFVFTFAAATAIAAGIRAHSCSNQDYLDDNNIAQGSSGRCRKAQASTAFLYFSTFIFIASAIFSAISLSKGGLFGHSSRPAPRTGVPTMSQV.

Residues methionine 1–alanine 11 are Cytoplasmic-facing. In terms of domain architecture, MARVEL spans aspartate 6–phenylalanine 141. The helical transmembrane segment at phenylalanine 12 to isoleucine 32 threads the bilayer. The Extracellular portion of the chain corresponds to threonine 33 to glutamine 38. A helical transmembrane segment spans residues isoleucine 39–tyrosine 61. The Cytoplasmic segment spans residues phenylalanine 62–aspartate 76. A helical transmembrane segment spans residues phenylalanine 77–histidine 97. Topologically, residues serine 98–threonine 125 are extracellular. The chain crosses the membrane as a helical span at residues alanine 126 to leucine 146. At serine 147–valine 170 the chain is on the cytoplasmic side.

It belongs to the NCE102 family.

It is found in the cell membrane. Its function is as follows. Involved in membrane organization. Involved in a novel pathway of export of proteins that lack a cleavable signal sequence. Non-classical export pathway also functions as an alternative clearance/detoxification pathway to eliminate damaged material, when the basic repair pathway is not sufficient. Regulates actin organization and subsequent morphogenesis and pathogenesis. The polypeptide is Non-classical export protein 102 (Candida albicans (strain SC5314 / ATCC MYA-2876) (Yeast)).